The chain runs to 241 residues: MDRHRYLSILTPELVAGVVPAAYELFMTERRGSIAIIPPVDRSDESRVESIIRAHGRPIIAFAGRMGSGKDHACDYFCERFGAIKLHIFESGLRRIGLFYGRAIDKSIDRSVLQAVGELGRRLRPQFWLQMTFEEDLLRILDRDRPVVITGVRYKTDVRYLATLGVRTFIIRRPGLVLAGTPEESDPSERDLDDYHECAELINRGTVGDFDALLAETARDISLSELVPVTDTGRECPRIFP.

This is an uncharacterized protein from Ictaluridae (bullhead catfishes).